Here is a 158-residue protein sequence, read N- to C-terminus: Cyclic pyranopterin monophosphate synthase (158 aa).

Residues 75-77 and 113-114 each bind substrate; these read LCH and ME. Residue Asp128 is part of the active site.

The protein belongs to the MoaC family. In terms of assembly, homohexamer; trimer of dimers.

The enzyme catalyses (8S)-3',8-cyclo-7,8-dihydroguanosine 5'-triphosphate = cyclic pyranopterin phosphate + diphosphate. It functions in the pathway cofactor biosynthesis; molybdopterin biosynthesis. In terms of biological role, catalyzes the conversion of (8S)-3',8-cyclo-7,8-dihydroguanosine 5'-triphosphate to cyclic pyranopterin monophosphate (cPMP). The polypeptide is Cyclic pyranopterin monophosphate synthase (Mannheimia succiniciproducens (strain KCTC 0769BP / MBEL55E)).